Consider the following 351-residue polypeptide: Photosystem II D2 protein (351 aa).

The chain crosses the membrane as a helical span at residues 39–59 (CAYMAIGGWLTGTTFATSWYT). Histidine 116 lines the chlorophyll a pocket. A helical membrane pass occupies residues 123–139 (GFMLRQFEIARLVGVRP). Pheophytin a is bound by residues glutamine 128 and asparagine 141. A helical transmembrane segment spans residues 151–164 (LFVSVFLIYPLGQS). Residue histidine 196 participates in chlorophyll a binding. The chain crosses the membrane as a helical span at residues 206-226 (GALLCAIHGATVENTLFEDGD). The a plastoquinone site is built by histidine 213 and phenylalanine 260. Histidine 213 provides a ligand contact to Fe cation. Histidine 267 serves as a coordination point for Fe cation. Residues 277-293 (GLWMSAIGVVGLALNLR) traverse the membrane as a helical segment.

It belongs to the reaction center PufL/M/PsbA/D family. PSII is composed of 1 copy each of membrane proteins PsbA, PsbB, PsbC, PsbD, PsbE, PsbF, PsbH, PsbI, PsbJ, PsbK, PsbL, PsbM, PsbT, PsbX, PsbY, PsbZ, Psb30/Ycf12, peripheral proteins PsbO, CyanoQ (PsbQ), PsbU, PsbV and a large number of cofactors. It forms dimeric complexes. The cofactor is The D1/D2 heterodimer binds P680, chlorophylls that are the primary electron donor of PSII, and subsequent electron acceptors. It shares a non-heme iron and each subunit binds pheophytin, quinone, additional chlorophylls, carotenoids and lipids. There is also a Cl(-1) ion associated with D1 and D2, which is required for oxygen evolution. The PSII complex binds additional chlorophylls, carotenoids and specific lipids..

Its subcellular location is the cellular thylakoid membrane. The enzyme catalyses 2 a plastoquinone + 4 hnu + 2 H2O = 2 a plastoquinol + O2. In terms of biological role, photosystem II (PSII) is a light-driven water:plastoquinone oxidoreductase that uses light energy to abstract electrons from H(2)O, generating O(2) and a proton gradient subsequently used for ATP formation. It consists of a core antenna complex that captures photons, and an electron transfer chain that converts photonic excitation into a charge separation. The D1/D2 (PsbA/PsbD) reaction center heterodimer binds P680, the primary electron donor of PSII as well as several subsequent electron acceptors. D2 is needed for assembly of a stable PSII complex. This is Photosystem II D2 protein from Prochlorothrix hollandica.